The following is a 101-amino-acid chain: Ubiquitin-related modifier 1 homolog (101 aa).

A 1-thioglycine modification is found at G101. G101 participates in a covalent cross-link: Glycyl lysine isopeptide (Gly-Lys) (interchain with K-? in acceptor proteins).

The protein belongs to the URM1 family. Interacts with cer. C-terminal thiocarboxylation occurs in 2 steps, it is first acyl-adenylated (-COAMP) via the hesA/moeB/thiF part of the MOCS3 homolog, then thiocarboxylated (-COSH) via the rhodanese domain of the MOCS3 homolog.

The protein localises to the cytoplasm. Its pathway is tRNA modification; 5-methoxycarbonylmethyl-2-thiouridine-tRNA biosynthesis. Acts as a sulfur carrier required for 2-thiolation of mcm(5)S(2)U at tRNA wobble positions of cytosolic tRNA(Lys), tRNA(Glu) and tRNA(Gln). Serves as sulfur donor in tRNA 2-thiolation reaction by being thiocarboxylated (-COSH) at its C-terminus by MOCS3. The sulfur is then transferred to tRNA to form 2-thiolation of mcm(5)S(2)U. Also acts as a ubiquitin-like protein (UBL) that is covalently conjugated via an isopeptide bond to lysine residues of target proteins such as Prx2/Jafrac1, Ciao1, Eip71CD and GILT1. The thiocarboxylated form serves as substrate for conjugation and oxidative stress specifically induces the formation of UBL-protein conjugates. The polypeptide is Ubiquitin-related modifier 1 homolog (Drosophila sechellia (Fruit fly)).